The sequence spans 125 residues: UPF0102 protein PBPRA3228 (125 aa).

The protein belongs to the UPF0102 family.

This Photobacterium profundum (strain SS9) protein is UPF0102 protein PBPRA3228.